A 264-amino-acid chain; its full sequence is Diphthine synthase (264 aa).

Residues Leu-10, Asp-87, Val-90, 115-116, Leu-166, Ala-209, and His-234 contribute to the S-adenosyl-L-methionine site; that span reads SI.

Belongs to the diphthine synthase family. As to quaternary structure, homodimer.

It catalyses the reaction 2-[(3S)-amino-3-carboxypropyl]-L-histidyl-[translation elongation factor 2] + 3 S-adenosyl-L-methionine = diphthine-[translation elongation factor 2] + 3 S-adenosyl-L-homocysteine + 3 H(+). It functions in the pathway protein modification; peptidyl-diphthamide biosynthesis. Functionally, S-adenosyl-L-methionine-dependent methyltransferase that catalyzes the trimethylation of the amino group of the modified target histidine residue in translation elongation factor 2 (EF-2), to form an intermediate called diphthine. The three successive methylation reactions represent the second step of diphthamide biosynthesis. The polypeptide is Diphthine synthase (Thermococcus onnurineus (strain NA1)).